The chain runs to 123 residues: Fluoride-specific ion channel FluC (123 aa).

4 helical membrane-spanning segments follow: residues 7-27 (MAIA…SGLL), 39-59 (MVNS…FWGF), 68-88 (FFGT…YETF), and 101-121 (LNIL…FMLA). Na(+) is bound by residues Gly75 and Ser78.

This sequence belongs to the fluoride channel Fluc/FEX (TC 1.A.43) family.

It is found in the cell membrane. The catalysed reaction is fluoride(in) = fluoride(out). Na(+) is not transported, but it plays an essential structural role and its presence is essential for fluoride channel function. Functionally, fluoride-specific ion channel. Important for reducing fluoride concentration in the cell, thus reducing its toxicity. The sequence is that of Fluoride-specific ion channel FluC from Thermococcus kodakarensis (strain ATCC BAA-918 / JCM 12380 / KOD1) (Pyrococcus kodakaraensis (strain KOD1)).